Reading from the N-terminus, the 295-residue chain is Phosphate transport system permease protein PstA (295 aa).

6 helical membrane passes run Ile-29 to Leu-49, Leu-88 to Leu-108, Asp-126 to Ala-146, Glu-149 to Ile-169, Ile-198 to Ile-218, and Asn-266 to Ala-286. In terms of domain architecture, ABC transmembrane type-1 spans Ile-83 to Ala-286.

This sequence belongs to the binding-protein-dependent transport system permease family. CysTW subfamily.

It localises to the cell inner membrane. Functionally, part of a binding-protein-dependent transport system for phosphate; probably responsible for the translocation of the substrate across the membrane. The polypeptide is Phosphate transport system permease protein PstA (pstA) (Yersinia pestis).